The sequence spans 324 residues: Methenyltetrahydromethanopterin cyclohydrolase (324 aa).

It belongs to the MCH family.

It localises to the cytoplasm. It carries out the reaction 5,10-methenyl-5,6,7,8-tetrahydromethanopterin + H2O = N(5)-formyl-5,6,7,8-tetrahydromethanopterin + H(+). Its pathway is one-carbon metabolism; formaldehyde degradation; formate from formaldehyde (H(4)MPT route): step 3/5. Catalyzes the hydrolysis of methenyl-H(4)MPT(+) to 5-formyl-H(4)MPT. This Methylobacterium nodulans (strain LMG 21967 / CNCM I-2342 / ORS 2060) protein is Methenyltetrahydromethanopterin cyclohydrolase.